A 160-amino-acid chain; its full sequence is Cytochrome b6-f complex subunit 4 (160 aa).

The next 3 helical transmembrane spans lie at 36-56, 95-115, and 131-151; these read LLYIFPVVILGTIACNVGLAV, LLGVLLMVSVPVGLLTVPFLE, and TVFLIGTAVALWLGIGATLPI.

The protein belongs to the cytochrome b family. PetD subfamily. As to quaternary structure, the 4 large subunits of the cytochrome b6-f complex are cytochrome b6, subunit IV (17 kDa polypeptide, petD), cytochrome f and the Rieske protein, while the 4 small subunits are petG, petL, petM and petN. The complex functions as a dimer.

The protein resides in the plastid. It is found in the chloroplast thylakoid membrane. Component of the cytochrome b6-f complex, which mediates electron transfer between photosystem II (PSII) and photosystem I (PSI), cyclic electron flow around PSI, and state transitions. This is Cytochrome b6-f complex subunit 4 from Daucus carota (Wild carrot).